The primary structure comprises 301 residues: Putative phosphoenolpyruvate synthase regulatory protein (301 aa).

Positions 1 to 24 (MSEPVAPDGAQPAPAGATPQPLQP) are enriched in low complexity. The interval 1–27 (MSEPVAPDGAQPAPAGATPQPLQPIAG) is disordered. 181–188 (GVSRSGKT) is a binding site for ADP.

The protein belongs to the pyruvate, phosphate/water dikinase regulatory protein family. PSRP subfamily.

The enzyme catalyses [pyruvate, water dikinase] + ADP = [pyruvate, water dikinase]-phosphate + AMP + H(+). It catalyses the reaction [pyruvate, water dikinase]-phosphate + phosphate + H(+) = [pyruvate, water dikinase] + diphosphate. Its function is as follows. Bifunctional serine/threonine kinase and phosphorylase involved in the regulation of the phosphoenolpyruvate synthase (PEPS) by catalyzing its phosphorylation/dephosphorylation. This Cupriavidus pinatubonensis (strain JMP 134 / LMG 1197) (Cupriavidus necator (strain JMP 134)) protein is Putative phosphoenolpyruvate synthase regulatory protein.